A 526-amino-acid chain; its full sequence is Estrogen receptor beta (526 aa).

The interval 1–145 is modulating; sequence MDIKNSPSNL…SPSSKRDAHF (145 aa). Phosphoserine; by MAPK is present on residues Ser-84 and Ser-102. 2 consecutive NR C4-type zinc fingers follow at residues 146-166 and 182-206; these read CAVCSDYASGYHYGVWSCEGC and CPATNQCTIDKNRRKSCQACRLRKC. The nuclear receptor DNA-binding region spans 146-211; the sequence is CAVCSDYASG…RLRKCYEVGM (66 aa). An NR LBD domain is found at 261–494; the sequence is SPEQLVLTLL…DLLLEMLNAH (234 aa). Residues 502–526 form a disordered region; the sequence is LVTGSERSRMEESESKEGSQKPQAQ. Residues 507–520 are compositionally biased toward basic and acidic residues; it reads ERSRMEESESKEGS.

This sequence belongs to the nuclear hormone receptor family. NR3 subfamily. In terms of assembly, binds DNA as a homodimer. Can form a heterodimer with ESR1. Interacts with NCOA1, NCOA3, NCOA5 and NCOA6 coactivators, leading to a strong increase of transcription of target genes. Interacts with UBE1C and AKAP13. Interacts with DNTTIP2. Interacts with CCDC62 in the presence of estradiol/E2; this interaction seems to enhance the transcription of target genes. Interacts with DNAAF4. Interacts with PRMT2. Interacts with CCAR2 (via N-terminus) in a ligand-independent manner. Interacts with RBM39, in the presence of estradiol (E2). Interacts with STUB1/CHIP. Post-translationally, phosphorylation at Ser-84 and Ser-102 recruits NCOA1.

The protein resides in the nucleus. In terms of biological role, nuclear hormone receptor. Binds estrogens with an affinity similar to that of ESR1/ER-alpha, and activates expression of reporter genes containing estrogen response elements (ERE) in an estrogen-dependent manner. The sequence is that of Estrogen receptor beta (ESR2) from Sus scrofa (Pig).